Here is a 111-residue protein sequence, read N- to C-terminus: Thiosulfate sulfurtransferase GlpE (111 aa).

The region spanning 16–104 is the Rhodanese domain; that stretch reads QTENAVLLDV…WQRAGLPMET (89 aa). Residue C64 is the Cysteine persulfide intermediate of the active site.

It belongs to the GlpE family.

It localises to the cytoplasm. The catalysed reaction is thiosulfate + hydrogen cyanide = thiocyanate + sulfite + 2 H(+). The enzyme catalyses thiosulfate + [thioredoxin]-dithiol = [thioredoxin]-disulfide + hydrogen sulfide + sulfite + 2 H(+). In terms of biological role, transferase that catalyzes the transfer of sulfur from thiosulfate to thiophilic acceptors such as cyanide or dithiols. May function in a CysM-independent thiosulfate assimilation pathway by catalyzing the conversion of thiosulfate to sulfite, which can then be used for L-cysteine biosynthesis. The polypeptide is Thiosulfate sulfurtransferase GlpE (Actinobacillus succinogenes (strain ATCC 55618 / DSM 22257 / CCUG 43843 / 130Z)).